The chain runs to 254 residues: Fasciclin-like arabinogalactan protein 7 (254 aa).

The first 22 residues, 1–22, serve as a signal peptide directing secretion; sequence MAKMQLSIFIAVVALIVCSASA. Residues 44-186 form the FAS1 domain; that stretch reads NVNLTELLSV…VAVYQVNRVL (143 aa). 4 N-linked (GlcNAc...) asparagine glycosylation sites follow: Asn-46, Asn-78, Asn-104, and Asn-130. The tract at residues 203–233 is disordered; sequence APAPIVSAPSDSPSVADSEGASSPKSSHKNS. Low complexity predominate over residues 206-220; it reads PIVSAPSDSPSVADS. A compositionally biased stretch (polar residues) spans 222 to 233; the sequence is GASSPKSSHKNS. Residue Asn-232 is the site of GPI-anchor amidated asparagine attachment. Residues 233-254 constitute a propeptide, removed in mature form; the sequence is SGQKLLLAPISMVISGLVALFL.

This sequence belongs to the fasciclin-like AGP family.

The protein resides in the cell membrane. Functionally, may be a cell surface adhesion protein. The protein is Fasciclin-like arabinogalactan protein 7 (FLA7) of Arabidopsis thaliana (Mouse-ear cress).